Consider the following 335-residue polypeptide: Dolichyl-diphosphooligosaccharide--protein glycosyltransferase subunit MAGT1 (335 aa).

The N-terminal stretch at 1-29 (MASPRWFWSVCAIAAVALLLVSKVPSASA) is a signal peptide. The Extracellular segment spans residues 30–184 (QRKKEMVLSE…DVNIRVIRPP (155 aa)). Positions 47 to 175 (WANKRPVIRM…IARWIADRTD (129 aa)) constitute a Thioredoxin domain. An N-linked (GlcNAc...) asparagine glycan is attached at Asn71. An intrachain disulfide couples Cys87 to Cys90. A helical membrane pass occupies residues 185–205 (NYAGPLMLGLLLAVIGGLVYL). At 206–209 (RRSN) the chain is on the cytoplasmic side. Residues 210 to 230 (MEFLFNKTGWAFAALCFVLAM) form a helical membrane-spanning segment. Over 231–270 (TSGQMWNHIRGPPYAHKNPHTGHVNYIHGSSQAQFVAETH) the chain is Extracellular. Residues 271–291 (IVLLFNGGVTLGMVLLCEAAT) form a helical membrane-spanning segment. At 292–300 (SDMDIGKRR) the chain is on the cytoplasmic side. The helical transmembrane segment at 301–321 (MMCIAGIGLVVLFFSWMLSIF) threads the bilayer. Topologically, residues 322–335 (RSKYHGYPYSFLMS) are extracellular.

It belongs to the OST3/OST6 family. As to quaternary structure, accessory component of the STT3B-containing form of the oligosaccharyltransferase (OST) complex. OST exists in two different complex forms which contain common core subunits RPN1, RPN2, OST48, OST4, DAD1 and TMEM258, either STT3A or STT3B as catalytic subunits, and form-specific accessory subunits. OST can form stable complexes with the Sec61 complex or with both the Sec61 and TRAP complexes. The association of TUSC3 or MAGT1 with the STT3B-containing complex seems to be mutually exclusvice. As to expression, expressed at high levels in kidney, colon, heart and liver. Expressed at lower levels in intestine, spleen, brain and lung.

Its subcellular location is the cell membrane. It localises to the endoplasmic reticulum. It is found in the endoplasmic reticulum membrane. Its pathway is protein modification; protein glycosylation. Functionally, accessory component of the STT3B-containing form of the N-oligosaccharyl transferase (OST) complex which catalyzes the transfer of a high mannose oligosaccharide from a lipid-linked oligosaccharide donor to an asparagine residue within an Asn-X-Ser/Thr consensus motif in nascent polypeptide chains. Involved in N-glycosylation of STT3B-dependent substrates. Specifically required for the glycosylation of a subset of acceptor sites that are near cysteine residues; in this function seems to act redundantly with TUSC3. In its oxidized form proposed to form transient mixed disulfides with a glycoprotein substrate to facilitate access of STT3B to the unmodified acceptor site. Also has oxidoreductase-independent functions in the STT3B-containing OST complex possibly involving substrate recognition. Could indirectly play a role in Mg(2+) transport in epithelial cells. This Mus musculus (Mouse) protein is Dolichyl-diphosphooligosaccharide--protein glycosyltransferase subunit MAGT1.